We begin with the raw amino-acid sequence, 333 residues long: T-cell surface glycoprotein CD1b (333 aa).

Positions 1–18 (MLLLPFQLLAVLFPGGNS) are cleaved as a signal peptide. At 19–303 (EHAFQGPTSF…YWSNPTSIGS (285 aa)) the chain is on the extracellular side. Asn-38, Asn-75, and Asn-146 each carry an N-linked (GlcNAc...) asparagine glycan. 3 cysteine pairs are disulfide-bonded: Cys-120–Cys-184, Cys-149–Cys-163, and Cys-224–Cys-279. In terms of domain architecture, Ig-like spans 185–295 (PRYLLGVLNA…LEGQDIILYW (111 aa)). Asn-258 is a glycosylation site (N-linked (GlcNAc...) asparagine). Residues 304–324 (IVLAIIVPSLLLLLCLALWYM) traverse the membrane as a helical segment. Over 325–333 (RRRSYQNIP) the chain is Cytoplasmic. The Internalization signal signature appears at 329–332 (YQNI).

As to quaternary structure, heterodimer with B2M (beta-2-microglobulin). Interacts with saposin C. As to expression, expressed in lymphocytes, spleen, lung, liver, kidney and heart.

The protein resides in the cell membrane. Its subcellular location is the endosome membrane. The protein localises to the lysosome membrane. Functionally, antigen-presenting protein that binds self and non-self lipid and glycolipid antigens and presents them to T-cell receptors on natural killer T-cells. This chain is T-cell surface glycoprotein CD1b (CD1B), found in Aotus nancymaae (Ma's night monkey).